Here is a 350-residue protein sequence, read N- to C-terminus: Blue-sensitive opsin (350 aa).

Topologically, residues 1–36 (MNGTEGPNFYVPMSNATGVVRSPFEYPQYYLAEPWA) are extracellular. 2 N-linked (GlcNAc...) asparagine glycosylation sites follow: N2 and N15. A helical transmembrane segment spans residues 37 to 61 (FSILAAYMFFLIITGFPINFLTLYV). Residues 62–73 (TIEHKKLRTPLN) lie on the Cytoplasmic side of the membrane. Residues 74–98 (YILLNLAVADLFMVFGGFTTTMYTS) traverse the membrane as a helical segment. The Extracellular portion of the chain corresponds to 99–113 (MHGYFVFGETGCNLE). C110 and C187 form a disulfide bridge. A helical transmembrane segment spans residues 114-133 (GYFATLGGEISLWSLVVLAI). The Cytoplasmic portion of the chain corresponds to 134–152 (ERWVVVCKPISNFRFGENH). The chain crosses the membrane as a helical span at residues 153-176 (AIMGLTLTWVMANACAMPPLFGWS). The Extracellular segment spans residues 177–202 (RYIPEGLQCSCGIDYYTLKPEVNNES). N-linked (GlcNAc...) asparagine glycosylation is present at N200. A helical transmembrane segment spans residues 203 to 230 (FVIYMFLVHFTIPLTIISFCYGRLVCAV). The Cytoplasmic segment spans residues 231-252 (KEAAAQQQESETTQRAEREVTR). Residues 253–276 (MVVIMVISFLVCWIPYASVAWYIF) form a helical membrane-spanning segment. The Extracellular portion of the chain corresponds to 277–284 (THQGSTFG). Residues 285 to 309 (PIFMTVPSFFAKSSSIYNPMIYICM) form a helical membrane-spanning segment. K296 carries the post-translational modification N6-(retinylidene)lysine. At 310-350 (NKQFRNCMITTLFCGKNPFEGEEEGSTTKTEASAVSSVSPA) the chain is on the cytoplasmic side. The segment at 330–350 (GEEEGSTTKTEASAVSSVSPA) is disordered.

It belongs to the G-protein coupled receptor 1 family. Opsin subfamily. In terms of processing, phosphorylated on some or all of the serine and threonine residues present in the C-terminal region. Rod shaped photoreceptor cells which mediates vision in dim light.

The protein resides in the membrane. Its function is as follows. Visual pigments are the light-absorbing molecules that mediate vision. They consist of an apoprotein, opsin, covalently linked to cis-retinal. The polypeptide is Blue-sensitive opsin (Conger conger (Conger eel)).